Here is a 228-residue protein sequence, read N- to C-terminus: Sugar fermentation stimulation protein homolog (228 aa).

It belongs to the SfsA family.

The polypeptide is Sugar fermentation stimulation protein homolog (Psychromonas ingrahamii (strain DSM 17664 / CCUG 51855 / 37)).